Here is a 404-residue protein sequence, read N- to C-terminus: Cysteine desulfurase IscS (404 aa).

Residues 75-76 (AT), N155, Q183, and 203-205 (SAH) contribute to the pyridoxal 5'-phosphate site. Position 206 is an N6-(pyridoxal phosphate)lysine (K206). T243 is a binding site for pyridoxal 5'-phosphate. C328 serves as the catalytic Cysteine persulfide intermediate. A [2Fe-2S] cluster-binding site is contributed by C328.

This sequence belongs to the class-V pyridoxal-phosphate-dependent aminotransferase family. NifS/IscS subfamily. As to quaternary structure, homodimer. Forms a heterotetramer with IscU, interacts with other sulfur acceptors. Pyridoxal 5'-phosphate serves as cofactor.

It is found in the cytoplasm. It catalyses the reaction (sulfur carrier)-H + L-cysteine = (sulfur carrier)-SH + L-alanine. The protein operates within cofactor biosynthesis; iron-sulfur cluster biosynthesis. Its function is as follows. Master enzyme that delivers sulfur to a number of partners involved in Fe-S cluster assembly, tRNA modification or cofactor biosynthesis. Catalyzes the removal of elemental sulfur atoms from cysteine to produce alanine. Functions as a sulfur delivery protein for Fe-S cluster synthesis onto IscU, an Fe-S scaffold assembly protein, as well as other S acceptor proteins. The polypeptide is Cysteine desulfurase IscS (Pseudomonas entomophila (strain L48)).